The primary structure comprises 102 residues: Integration host factor subunit beta (102 aa).

A disordered region spans residues 54–102; sequence HHRPARMGRNPKTGEPVALPAKYVPHFKPGKELRERVNSSRHQAPLRSQ. A compositionally biased stretch (basic and acidic residues) spans 82 to 91; it reads PGKELRERVN. Positions 93–102 are enriched in polar residues; that stretch reads SRHQAPLRSQ.

The protein belongs to the bacterial histone-like protein family. In terms of assembly, heterodimer of an alpha and a beta chain.

This protein is one of the two subunits of integration host factor, a specific DNA-binding protein that functions in genetic recombination as well as in transcriptional and translational control. This chain is Integration host factor subunit beta, found in Halorhodospira halophila (strain DSM 244 / SL1) (Ectothiorhodospira halophila (strain DSM 244 / SL1)).